We begin with the raw amino-acid sequence, 42 residues long: Photosystem I reaction center subunit IX (42 aa).

A helical membrane pass occupies residues 7–27 (YLSTAPVLAAIWFAILAGLLI).

It belongs to the PsaJ family.

The protein resides in the plastid. The protein localises to the chloroplast thylakoid membrane. May help in the organization of the PsaE and PsaF subunits. The chain is Photosystem I reaction center subunit IX from Zygnema circumcarinatum (Green alga).